Consider the following 110-residue polypeptide: MEIEKTNRMNALFEFYAALLTDKQMNYIELYYADDYSLAEIAEESGVSRQAVYDNIKRTEKILEAYEMKLHMYSDYIVRSQIFDDILEKYTDDAFLQEKISILSSIDNRD.

It belongs to the UPF0122 family.

Functionally, might take part in the signal recognition particle (SRP) pathway. This is inferred from the conservation of its genetic proximity to ftsY/ffh. May be a regulatory protein. The protein is UPF0122 protein gbs1018 of Streptococcus agalactiae serotype III (strain NEM316).